The chain runs to 141 residues: Large ribosomal subunit protein uL11 (141 aa).

It belongs to the universal ribosomal protein uL11 family. Part of the ribosomal stalk of the 50S ribosomal subunit. Interacts with L10 and the large rRNA to form the base of the stalk. L10 forms an elongated spine to which L12 dimers bind in a sequential fashion forming a multimeric L10(L12)X complex. In terms of processing, one or more lysine residues are methylated.

In terms of biological role, forms part of the ribosomal stalk which helps the ribosome interact with GTP-bound translation factors. The protein is Large ribosomal subunit protein uL11 of Thermotoga neapolitana (strain ATCC 49049 / DSM 4359 / NBRC 107923 / NS-E).